Reading from the N-terminus, the 177-residue chain is Large ribosomal subunit protein uL22 (177 aa).

The disordered stretch occupies residues 118 to 177 (VESRPSREGRRGGAGESAGGARARRAQGSKAAAAKKAPASSSTKAATTTEASEEAKGGSQ). Positions 121–130 (RPSREGRRGG) are enriched in basic and acidic residues. Residues 145 to 167 (GSKAAAAKKAPASSSTKAATTTE) are compositionally biased toward low complexity.

It belongs to the universal ribosomal protein uL22 family. In terms of assembly, part of the 50S ribosomal subunit.

This protein binds specifically to 23S rRNA; its binding is stimulated by other ribosomal proteins, e.g. L4, L17, and L20. It is important during the early stages of 50S assembly. It makes multiple contacts with different domains of the 23S rRNA in the assembled 50S subunit and ribosome. Functionally, the globular domain of the protein is located near the polypeptide exit tunnel on the outside of the subunit, while an extended beta-hairpin is found that lines the wall of the exit tunnel in the center of the 70S ribosome. The polypeptide is Large ribosomal subunit protein uL22 (Mycobacterium sp. (strain JLS)).